The primary structure comprises 339 residues: Dihydroorotate dehydrogenase (quinone) (339 aa).

Residues 62 to 66 (AGMDK) and threonine 86 contribute to the FMN site. Lysine 66 lines the substrate pocket. Position 111–115 (111–115 (NRMGF)) interacts with substrate. FMN-binding residues include asparagine 139 and asparagine 172. Residue asparagine 172 coordinates substrate. The Nucleophile role is filled by serine 175. Asparagine 177 serves as a coordination point for substrate. The FMN site is built by lysine 217 and threonine 245. Residue 246-247 (NT) coordinates substrate. Residues glycine 268, glycine 297, and 318 to 319 (YS) contribute to the FMN site.

Belongs to the dihydroorotate dehydrogenase family. Type 2 subfamily. Monomer. FMN serves as cofactor.

It is found in the cell membrane. The enzyme catalyses (S)-dihydroorotate + a quinone = orotate + a quinol. It participates in pyrimidine metabolism; UMP biosynthesis via de novo pathway; orotate from (S)-dihydroorotate (quinone route): step 1/1. Catalyzes the conversion of dihydroorotate to orotate with quinone as electron acceptor. In Shewanella baltica (strain OS223), this protein is Dihydroorotate dehydrogenase (quinone).